Consider the following 424-residue polypeptide: Interleukin-13 receptor subunit alpha-1 (424 aa).

Residues 1–25 (MARPALLGELLVLLLWTATVGQVAA) form the signal peptide. Over 26–340 (ATEVQPPVTN…QSIGKEQNST (315 aa)) the chain is Extracellular. The 90-residue stretch at 32–121 (PVTNLSVSVE…VKKCISPPEG (90 aa)) folds into the Fibronectin type-III 1 domain. 4 N-linked (GlcNAc...) asparagine glycosylation sites follow: Asn-35, Asn-59, Asn-103, and Asn-136. A disulfide bridge connects residues Cys-44 and Cys-93. Cystine bridges form between Cys-132/Cys-142 and Cys-171/Cys-183. The 113-residue stretch at 224–336 (KPDPPHIKHL…WSEAQSIGKE (113 aa)) folds into the Fibronectin type-III 2 domain. Asn-262 carries N-linked (GlcNAc...) asparagine glycosylation. A WSXWS motif motif is present at residues 324 to 328 (WSDWS). N-linked (GlcNAc...) asparagine glycosylation is present at Asn-338. Residues 341 to 364 (FYTTMLLTIPVFVAVAVIILLFYL) form a helical membrane-spanning segment. The Cytoplasmic segment spans residues 365–424 (KRLKIIIFPPIPDPGKIFKEMFGDQNDDTLHWKKYDIYEKQSKEETDSVVLIENLKKAAP). Residues 371 to 379 (IFPPIPDPG) carry the Box 1 motif motif.

It belongs to the type I cytokine receptor family. Type 5 subfamily. As to quaternary structure, interleukin-13 receptor is a complex of IL4R, IL13RA1, and possibly other components. Interacts with TRAF3IP1. Interacts with IL4. Spleen, liver, thymus, heart, lung, kidney, testis, stomach, brain, skin, and colon; but not skeletal muscle.

It localises to the membrane. Its function is as follows. Binds with low affinity to interleukin-13 (IL13). Together with IL4RA can form a functional receptor for IL13. Also serves as an alternate accessory protein to the common cytokine receptor gamma chain for interleukin-4 (IL4) signaling, but cannot replace the function of IL2RG in allowing enhanced interleukin-2 (IL2) binding activity. The chain is Interleukin-13 receptor subunit alpha-1 (Il13ra1) from Mus musculus (Mouse).